The sequence spans 1244 residues: Putative late blight resistance protein homolog R1A-4 (1244 aa).

Coiled coils occupy residues 411–434 (RYSD…ESLQ) and 526–548 (PRMN…QLLN). The NB-ARC domain occupies 527–755 (RMNEEIVGFK…ECWEQVANDL (229 aa)). 560–567 (GMPGLGKT) serves as a coordination point for ATP. LRR repeat units follow at residues 978 to 1004 (LWNL…VWDM), 1079 to 1103 (PIRL…ISAP), 1127 to 1150 (LKNL…KVSN), 1153 to 1178 (FPQL…AFPN), and 1213 to 1237 (ESVV…NFKL).

The protein belongs to the disease resistance NB-LRR family.

It localises to the cytoplasm. Its subcellular location is the membrane. In terms of biological role, confers resistance to late blight (Phytophthora infestans) races carrying the avirulence gene Avr1. Resistance proteins guard the plant against pathogens that contain an appropriate avirulence protein via an indirect interaction with this avirulence protein. That triggers a defense system including the hypersensitive response, which restricts the pathogen growth. The sequence is that of Putative late blight resistance protein homolog R1A-4 (R1A-4) from Solanum demissum (Wild potato).